Consider the following 258-residue polypeptide: Thiazole synthase (258 aa).

The active-site Schiff-base intermediate with DXP is the lysine 98. 1-deoxy-D-xylulose 5-phosphate-binding positions include glycine 159, 185 to 186, and 207 to 208; these read AG and NT.

This sequence belongs to the ThiG family. As to quaternary structure, homotetramer. Forms heterodimers with either ThiH or ThiS.

It localises to the cytoplasm. The catalysed reaction is [ThiS sulfur-carrier protein]-C-terminal-Gly-aminoethanethioate + 2-iminoacetate + 1-deoxy-D-xylulose 5-phosphate = [ThiS sulfur-carrier protein]-C-terminal Gly-Gly + 2-[(2R,5Z)-2-carboxy-4-methylthiazol-5(2H)-ylidene]ethyl phosphate + 2 H2O + H(+). Its pathway is cofactor biosynthesis; thiamine diphosphate biosynthesis. Its function is as follows. Catalyzes the rearrangement of 1-deoxy-D-xylulose 5-phosphate (DXP) to produce the thiazole phosphate moiety of thiamine. Sulfur is provided by the thiocarboxylate moiety of the carrier protein ThiS. In vitro, sulfur can be provided by H(2)S. The chain is Thiazole synthase from Bacillus cereus (strain ATCC 14579 / DSM 31 / CCUG 7414 / JCM 2152 / NBRC 15305 / NCIMB 9373 / NCTC 2599 / NRRL B-3711).